The primary structure comprises 220 residues: Small ribosomal subunit protein uS3 (220 aa).

Residues 38–106 (IREFVKKSLN…EVFLNIVEVR (69 aa)) enclose the KH type-2 domain.

This sequence belongs to the universal ribosomal protein uS3 family. Part of the 30S ribosomal subunit. Forms a tight complex with proteins S10 and S14.

In terms of biological role, binds the lower part of the 30S subunit head. Binds mRNA in the 70S ribosome, positioning it for translation. This Myxococcus xanthus (strain DK1622) protein is Small ribosomal subunit protein uS3.